Consider the following 833-residue polypeptide: Leucine--tRNA ligase (833 aa).

The 'HIGH' region signature appears at 41–52 (PYPSGAGLHVGH). Positions 610–614 (KMSKS) match the 'KMSKS' region motif. K613 is an ATP binding site.

It belongs to the class-I aminoacyl-tRNA synthetase family.

The protein resides in the cytoplasm. It carries out the reaction tRNA(Leu) + L-leucine + ATP = L-leucyl-tRNA(Leu) + AMP + diphosphate. In Streptococcus pneumoniae (strain ATCC 700669 / Spain 23F-1), this protein is Leucine--tRNA ligase.